The sequence spans 173 residues: Alpha-crystallin A chain (173 aa).

Met-1 carries the post-translational modification N-acetylmethionine. The tract at residues 1–63 is required for complex formation with BFSP1 and BFSP2; the sequence is MDIAIQQPWF…RTVLDSGVSE (63 aa). Gln-6 carries the deamidated glutamine; partial modification. Ser-45 is modified (phosphoserine). Gln-50 is modified (deamidated glutamine; partial). Residues 52-162 form the sHSP domain; the sequence is LFRTVLDSGV…GHSERAIPVS (111 aa). 2 positions are modified to N6-acetyllysine: Lys-70 and Lys-99. Residue His-100 coordinates Zn(2+). Asn-101 carries the deamidated asparagine; partial modification. Residues Glu-102 and His-107 each contribute to the Zn(2+) site. Ser-122 carries the post-translational modification Phosphoserine. Asn-123 carries the deamidated asparagine; partial modification. Residues 144–173 form a disordered region; the sequence is PKVPSGVDAGHSERAIPVSREEKPSSAPSS. A compositionally biased stretch (basic and acidic residues) spans 153 to 167; that stretch reads GHSERAIPVSREEKP. His-154 contacts Zn(2+). Residue Ser-162 is glycosylated (O-linked (GlcNAc) serine).

The protein belongs to the small heat shock protein (HSP20) family. As to quaternary structure, heteromer composed of three CRYAA and one CRYAB subunits. Inter-subunit bridging via zinc ions enhances stability, which is crucial as there is no protein turn over in the lens. Can also form homodimers and homotetramers (dimers of dimers) which serve as the building blocks of homooligomers. Within homooligomers, the zinc-binding motif is created from residues of 3 different molecules. His-100 and Glu-102 from one molecule are ligands of the zinc ion, and His-107 and His-154 residues from additional molecules complete the site with tetrahedral coordination geometry. Part of a complex required for lens intermediate filament formation composed of BFSP1, BFSP2 and CRYAA. Acetylation at Lys-70 may increase chaperone activity. Post-translationally, undergoes age-dependent proteolytical cleavage at the C-terminus.

Its subcellular location is the cytoplasm. It localises to the nucleus. In terms of biological role, contributes to the transparency and refractive index of the lens. Acts as a chaperone, preventing aggregation of various proteins under a wide range of stress conditions. Required for the correct formation of lens intermediate filaments as part of a complex composed of BFSP1, BFSP2 and CRYAA. The protein is Alpha-crystallin A chain (CRYAA) of Neovison vison (American mink).